The primary structure comprises 291 residues: 33 kDa chaperonin (291 aa).

Intrachain disulfides connect C237–C239 and C270–C273.

This sequence belongs to the HSP33 family. In terms of processing, under oxidizing conditions two disulfide bonds are formed involving the reactive cysteines. Under reducing conditions zinc is bound to the reactive cysteines and the protein is inactive.

The protein resides in the cytoplasm. Its function is as follows. Redox regulated molecular chaperone. Protects both thermally unfolding and oxidatively damaged proteins from irreversible aggregation. Plays an important role in the bacterial defense system toward oxidative stress. In Bacillus anthracis (strain A0248), this protein is 33 kDa chaperonin.